A 576-amino-acid chain; its full sequence is ATP-dependent RNA helicase has1 (576 aa).

The tract at residues 1-94 (MGSAQDQTKK…STMGLSLPTD (94 aa)) is disordered. Residues 26–37 (RVVEADDQRELT) are compositionally biased toward basic and acidic residues. Over residues 51 to 66 (PPTDETPDAEDVEQTE) the composition is skewed to acidic residues. Positions 98–126 (QKFDELNLSEPTMKAIRQMGFETMTEIQQ) match the Q motif motif. The 177-residue stretch at 129 to 305 (IPPTLAGRDI…RISLKPGPLY (177 aa)) folds into the Helicase ATP-binding domain. 142–149 (AKTGSGKT) serves as a coordination point for ATP. A DEAD box motif is present at residues 252–255 (DEAD). The region spanning 319–490 (GVDQGYIICE…DIQSQLEKLI (172 aa)) is the Helicase C-terminal domain. A disordered region spans residues 555 to 576 (DKVQARRPYGSQNKSARFKRRA).

This sequence belongs to the DEAD box helicase family. DDX18/HAS1 subfamily. In terms of assembly, associates in the nucleolus with the 60S and pre-60S ribosomal subunits.

The protein resides in the nucleus. It is found in the nucleolus. The enzyme catalyses ATP + H2O = ADP + phosphate + H(+). In terms of biological role, ATP-dependent RNA helicase involved in 40S ribosomal subunit biogenesis. Required for the processing and cleavage of 35S pre-rRNA at sites A0, A1, and A2, leading to mature 18S rRNA. This chain is ATP-dependent RNA helicase has1 (has1), found in Aspergillus terreus (strain NIH 2624 / FGSC A1156).